A 413-amino-acid chain; its full sequence is MSIQTTADSRMIQSIFQVVLVSLLVLGSVRWILDELKSKESRISKLYGFRQKEAVFVTKEDQLDESCNVFEGQWVWDNVSYPLYTEKSCPYLVKQTTCQRNGRPDSYYQNWRWKPSSCDLPRFNALKLLDVLRNKRLMFIGDSVQRSTFESMVCMVQSVIPEKKKSFHRIPPMKIFKAEEYNASIEYYWAPFIVESISDHATNHTVHKRLVKLDAIEKHSKSWEGVDVLVFESYVWWMHQPKINATYGDTSEVREYNVTTAYKMALETWAKWFKTKINSEKQKVFFTSMSPTHLWSWEWNPGSDGTCYDELYPIDKRSYWGTGSNQEIMKIVGDVLSRVGENVTFLNITQLSEYRKDGHTTVYGERRGKLLTKEQRADPKNYGDCIHWCLPGVPDTWNEILYAYLLRSHRNFF.

A helical; Signal-anchor for type II membrane protein transmembrane segment spans residues 12-34; sequence IQSIFQVVLVSLLVLGSVRWILD. The short motif at 141–143 is the GDS motif element; the sequence is GDS. Residues 384–398 carry the DCXHWCLPGXXDXWN motif motif; sequence DCIHWCLPGVPDTWN.

Belongs to the PC-esterase family. TBL subfamily.

The protein resides in the membrane. In terms of biological role, may act as a bridging protein that binds pectin and other cell wall polysaccharides. Probably involved in maintaining esterification of pectins. May be involved in the specific O-acetylation of cell wall polymers. The sequence is that of Protein trichome birefringence-like 31 (TBL31) from Arabidopsis thaliana (Mouse-ear cress).